The primary structure comprises 435 residues: Putative F-box/kelch-repeat protein At1g13200 (435 aa).

The segment at 1–29 (MKDAEKREVIASSSLQRKRNRGRRLRKRR) is disordered. The span at 16–29 (QRKRNRGRRLRKRR) shows a compositional bias: basic residues. Residues 37 to 82 (LMVPSSLPNDVLEEIFLRFPVKALIRLKSLSKQWRSTIESRSFEER) form the F-box domain. Kelch repeat units follow at residues 164-217 (SVYV…DYKL), 224-270 (DKYI…PASA), 273-317 (SVYW…HIDM), and 322-368 (NSLC…EKRD).

In Arabidopsis thaliana (Mouse-ear cress), this protein is Putative F-box/kelch-repeat protein At1g13200.